The following is a 124-amino-acid chain: UPF0231 protein Sputcn32_0682 (124 aa).

It belongs to the UPF0231 family.

The sequence is that of UPF0231 protein Sputcn32_0682 from Shewanella putrefaciens (strain CN-32 / ATCC BAA-453).